Reading from the N-terminus, the 480-residue chain is Iroquois-class homeodomain protein IRX-1 (480 aa).

A DNA-binding region (homeobox; TALE-type) is located at residues 125–188 (YGDPGRPKNA…ANARRRLKKE (64 aa)). Disordered regions lie at residues 190 to 268 (KVTW…QGSP), 280 to 354 (SPLG…PLQH), and 401 to 480 (PHGP…LPSA). Over residues 210 to 228 (TEGDPEKAEDDEEIDLESI) the composition is skewed to acidic residues. Residues 229–239 (DIDKIDEHDGD) show a composition bias toward basic and acidic residues. S241 is subject to Phosphoserine. Composition is skewed to low complexity over residues 252-262 (PHAPAAPSALA) and 340-351 (HPGAHGPSAGAP). Residues 404-417 (PHLPAPPPPQPPVA) show a composition bias toward pro residues.

The protein belongs to the TALE/IRO homeobox family.

It is found in the nucleus. This Homo sapiens (Human) protein is Iroquois-class homeodomain protein IRX-1 (IRX1).